Consider the following 452-residue polypeptide: Ribosome biogenesis protein YTM1 (452 aa).

A ubiquitin-like (UBL) domain region spans residues Ile17–Glu98. 3 WD repeats span residues Pro110 to Ile148, Ala150 to Ala195, and Leu208 to Val247. The tract at residues Asp245–Val269 is disordered. Over residues Leu252–Val269 the composition is skewed to basic and acidic residues. 4 WD repeats span residues Ser282–Thr322, Ala325–Thr364, Met371–Ala411, and Gly418–Val452.

This sequence belongs to the WD repeat WDR12/YTM1 family. As to quaternary structure, component of the NOP7 complex, composed of ERB1, NOP7 and YTM1. The complex is held together by ERB1, which interacts with NOP7 via its N-terminal domain and with YTM1 via a high-affinity interaction between the seven-bladed beta-propeller domains of the 2 proteins. The NOP7 complex associates with the 66S pre-ribosome. Interacts (via UBL domain) with MDN1 (via VWFA/MIDAS domain).

It localises to the nucleus. The protein localises to the nucleolus. It is found in the nucleoplasm. Its function is as follows. Component of the NOP7 complex, which is required for maturation of the 25S and 5.8S ribosomal RNAs and formation of the 60S ribosome. The polypeptide is Ribosome biogenesis protein YTM1 (Laccaria bicolor (strain S238N-H82 / ATCC MYA-4686) (Bicoloured deceiver)).